A 190-amino-acid chain; its full sequence is Elongation factor P (190 aa).

This sequence belongs to the elongation factor P family.

The protein localises to the cytoplasm. It participates in protein biosynthesis; polypeptide chain elongation. Functionally, involved in peptide bond synthesis. Stimulates efficient translation and peptide-bond synthesis on native or reconstituted 70S ribosomes in vitro. Probably functions indirectly by altering the affinity of the ribosome for aminoacyl-tRNA, thus increasing their reactivity as acceptors for peptidyl transferase. The polypeptide is Elongation factor P (Sulfurihydrogenibium sp. (strain YO3AOP1)).